The following is an 86-amino-acid chain: MVRHPYSVQTQLSTEAKAIWRSMQQQETNLLANLTTNDARDNSKDFQNSKVGAAATSRDEGCNCPIIGEIVISCYWLFEIPPLISE.

Retina-specific.

This is an uncharacterized protein from Homo sapiens (Human).